The primary structure comprises 462 residues: MVAEDFEAVLKAKYPSKSHAKRVVDLIREKIPNANGILYLESRMTKLLEDNDEPEPFRQRRFFYYLTGCNLPDCYYIYDIQSSKSILFIPPIDPDSVIWSGLPLSIDEALQKYDVDDVKLTSELNATLAHLGQANPQSTAYAIANQVSDHVTFLEFEKKNFDALKEAIEVSRVVKDEFEVAMIRKANHVSDIAHRAVLEKAKTAVNEREFEAAFLERCVAHGAKEMAYHPIAASGRAAATLHYVTNESPLEGKLNLLMDAGAEWNNYAADITRTFPLSGKFSKESREIYEIVLKMQNDCIAVLKEGVLWDDVHLLAHKIAIDGLLSIGILKGDKDEILKGRTSAAFLPHGLGHYLGMDTHDTGGNANYEDKDKLFRYLRVRGNLPSGSVITVEPGIYFCNFIIAPYLEDPVHSKFIDSAVLDKYWDVGGVRIEDNILITKDGYENLTITPKEVDEIETLVSN.

The Mn(2+) site is built by Asp259, Asp270, Glu393, and Glu433.

It belongs to the peptidase M24B family. The cofactor is Mn(2+).

The catalysed reaction is Release of any N-terminal amino acid, including proline, that is linked to proline, even from a dipeptide or tripeptide.. Functionally, catalyzes the removal of a penultimate prolyl residue from the N-termini of peptides. The sequence is that of Probable Xaa-Pro aminopeptidase NECHADRAFT_60613 from Fusarium vanettenii (strain ATCC MYA-4622 / CBS 123669 / FGSC 9596 / NRRL 45880 / 77-13-4) (Fusarium solani subsp. pisi).